A 486-amino-acid chain; its full sequence is Cardiolipin synthase A (486 aa).

The next 2 helical transmembrane spans lie at Thr-3–Val-23 and Met-38–Phe-58. 2 consecutive PLD phosphodiesterase domains span residues Met-219–Arg-246 and Glu-399–Ser-426. Catalysis depends on residues His-224, Lys-226, Asp-231, His-404, Lys-406, and Asp-411.

Belongs to the phospholipase D family. Cardiolipin synthase subfamily. ClsA sub-subfamily.

The protein resides in the cell inner membrane. The enzyme catalyses 2 a 1,2-diacyl-sn-glycero-3-phospho-(1'-sn-glycerol) = a cardiolipin + glycerol. Catalyzes the reversible phosphatidyl group transfer from one phosphatidylglycerol molecule to another to form cardiolipin (CL) (diphosphatidylglycerol) and glycerol. The chain is Cardiolipin synthase A from Edwardsiella ictaluri (strain 93-146).